A 347-amino-acid chain; its full sequence is Syntaxin-32 (347 aa).

Over 1 to 325 (MSARHGQSSY…RYLNSISSNR (325 aa)) the chain is Cytoplasmic. Disordered regions lie at residues 172-191 (HESR…TNPF) and 208-251 (PLPW…QQMV). Polar residues-rich tracts occupy residues 177–191 (QLFS…TNPF) and 213–222 (NGSSSSSSQL). The span at 237–249 (QQSQQQQQQQQQQ) shows a compositional bias: low complexity. Positions 255 to 317 (DTYMQGRAEA…EGAQSQLARY (63 aa)) constitute a t-SNARE coiled-coil homology domain. The chain crosses the membrane as a helical; Anchor for type IV membrane protein span at residues 326-346 (WLMMKIFFVLIAFLMIFLFFV). Ala-347 is a topological domain (vesicular).

This sequence belongs to the syntaxin family. Part of the t-SNARE complex.

The protein resides in the golgi apparatus. Its subcellular location is the cis-Golgi network membrane. In terms of biological role, vesicle trafficking protein that functions in the secretory pathway. The chain is Syntaxin-32 (SYP32) from Arabidopsis thaliana (Mouse-ear cress).